We begin with the raw amino-acid sequence, 144 residues long: uncharacterized protein (144 aa).

4 consecutive transmembrane segments (helical) span residues Val-27–Ile-47, Leu-49–Leu-69, Ile-83–Val-103, and Ala-106–Val-126.

The protein resides in the membrane. This is an uncharacterized protein from Saccharomyces cerevisiae (strain ATCC 204508 / S288c) (Baker's yeast).